Reading from the N-terminus, the 682-residue chain is Potassium-transporting ATPase ATP-binding subunit (682 aa).

Helical transmembrane passes span 34–54 (PVMF…LAMV), 58–78 (IAGS…TVLF), 219–239 (IALT…TATL), and 254–274 (VLVA…LSAI). D307 functions as the 4-aspartylphosphate intermediate in the catalytic mechanism. Residues D344, E348, 377 to 384 (FTAQSRMS), and K395 each bind ATP. Residues D518 and D522 each coordinate Mg(2+). The next 3 helical transmembrane spans lie at 588 to 608 (FAII…LNVM), 616 to 636 (AILS…PLAL), and 662 to 682 (LVVP…LGLA).

Belongs to the cation transport ATPase (P-type) (TC 3.A.3) family. Type IA subfamily. The system is composed of three essential subunits: KdpA, KdpB and KdpC.

It localises to the cell inner membrane. The enzyme catalyses K(+)(out) + ATP + H2O = K(+)(in) + ADP + phosphate + H(+). Part of the high-affinity ATP-driven potassium transport (or Kdp) system, which catalyzes the hydrolysis of ATP coupled with the electrogenic transport of potassium into the cytoplasm. This subunit is responsible for energy coupling to the transport system and for the release of the potassium ions to the cytoplasm. The polypeptide is Potassium-transporting ATPase ATP-binding subunit (Salmonella choleraesuis (strain SC-B67)).